The chain runs to 444 residues: Alanyl-tRNA editing protein Aarsd1 (444 aa).

2 residues coordinate Zn(2+): histidine 109 and histidine 113. Serine 174 is subject to Phosphoserine. Residues cysteine 209 and histidine 213 each contribute to the Zn(2+) site.

It belongs to the class-II aminoacyl-tRNA synthetase family. Alax-L subfamily. The cofactor is Zn(2+).

The protein resides in the cytoplasm. In terms of biological role, functions in trans to edit the amino acid moiety from incorrectly charged tRNA(Ala). The sequence is that of Alanyl-tRNA editing protein Aarsd1 (AARSD1) from Bos taurus (Bovine).